Consider the following 473-residue polypeptide: Keratin, type I cytoskeletal 16 (473 aa).

Residues 1-116 form a head region; it reads MTTCSRQFTS…AGGDGLLVGS (116 aa). Residues 117 to 152 form a coil 1A region; sequence EKVTMQNLNDRLASYLDKVRALEEANADLEVKIRDW. One can recognise an IF rod domain in the interval 117–428; that stretch reads EKVTMQNLND…RLLEGEDAHL (312 aa). The tract at residues 153–170 is linker 1; that stretch reads YQRQRPSEIKDYSPYFKT. The coil 1B stretch occupies residues 171-262; sequence IEDLRNKIIA…KNHEEEMLAL (92 aa). Positions 263–285 are linker 12; sequence RGQTGGDVNVEMDAAPGVDLSRI. Positions 286 to 424 are coil 2; that stretch reads LNEMRDQYEQ…ATYRRLLEGE (139 aa). Residues 425–473 form a tail region; that stretch reads DAHLSSQQASGQSYSSREVFTSSSSSSSRQTRPILKEQSSSSFSQGQSS. The segment at 428–473 is disordered; it reads LSSQQASGQSYSSREVFTSSSSSSSRQTRPILKEQSSSSFSQGQSS. 2 stretches are compositionally biased toward low complexity: residues 429-452 and 462-473; these read SSQQASGQSYSSREVFTSSSSSSS and QSSSSFSQGQSS.

This sequence belongs to the intermediate filament family. Heterodimer of a type I and a type II keratin. KRT16 associates with KRT6 isomers (KRT6A or KRT6B). Interacts with TCHP. Interacts with TRADD. Expressed in the corneal epithelium (at protein level).

Functionally, epidermis-specific type I keratin that plays a key role in skin. Acts as a regulator of innate immunity in response to skin barrier breach: required for some inflammatory checkpoint for the skin barrier maintenance. This Homo sapiens (Human) protein is Keratin, type I cytoskeletal 16 (KRT16).